We begin with the raw amino-acid sequence, 158 residues long: Eukaryotic translation initiation factor 5A (158 aa).

Residue Lys-51 is modified to Hypusine.

The protein belongs to the eIF-5A family. Lys-51 undergoes hypusination, a unique post-translational modification that consists in the addition of a butylamino group from spermidine to lysine side chain, leading to the formation of the unusual amino acid hypusine. eIF-5As are the only known proteins to undergo this modification, which is essential for their function.

Its subcellular location is the cytoplasm. Translation factor that promotes translation elongation and termination, particularly upon ribosome stalling at specific amino acid sequence contexts. Binds between the exit (E) and peptidyl (P) site of the ribosome and promotes rescue of stalled ribosome: specifically required for efficient translation of polyproline-containing peptides as well as other motifs that stall the ribosome. Acts as a ribosome quality control (RQC) cofactor by joining the RQC complex to facilitate peptidyl transfer during CAT tailing step. This Candida albicans (strain SC5314 / ATCC MYA-2876) (Yeast) protein is Eukaryotic translation initiation factor 5A (ANB1).